We begin with the raw amino-acid sequence, 329 residues long: NADH-quinone oxidoreductase subunit H 2 (329 aa).

8 helical membrane passes run 12–32 (GAKI…LVFA), 78–98 (WLFY…FAVI), 120–140 (VGLL…ALGG), 159–179 (LISY…LAGS), 191–211 (GVWF…SIAA), 242–262 (LFFV…TTFF), 270–290 (LLPP…FFIW), and 309–329 (KVLT…LMFV).

This sequence belongs to the complex I subunit 1 family. As to quaternary structure, NDH-1 is composed of 14 different subunits. Subunits NuoA, H, J, K, L, M, N constitute the membrane sector of the complex.

It localises to the cell inner membrane. It catalyses the reaction a quinone + NADH + 5 H(+)(in) = a quinol + NAD(+) + 4 H(+)(out). Functionally, NDH-1 shuttles electrons from NADH, via FMN and iron-sulfur (Fe-S) centers, to quinones in the respiratory chain. The immediate electron acceptor for the enzyme in this species is believed to be ubiquinone. Couples the redox reaction to proton translocation (for every two electrons transferred, four hydrogen ions are translocated across the cytoplasmic membrane), and thus conserves the redox energy in a proton gradient. This subunit may bind ubiquinone. This is NADH-quinone oxidoreductase subunit H 2 from Geobacter sulfurreducens (strain ATCC 51573 / DSM 12127 / PCA).